Consider the following 1007-residue polypeptide: Calmodulin-binding transcription activator 1 (1007 aa).

Positions 18–144 (MEQLLSEAQH…YLEVKGNRTS (127 aa)) form a DNA-binding region, CG-1. Positions 148–164 (KENNSNSVNGTASVNID) are enriched in polar residues. Positions 148-227 (KENNSNSVNG…VHGNRVRESD (80 aa)) are disordered. Positions 165-176 (STASPTSTLSSL) are enriched in low complexity. Residues 183–202 (GDSQQASSVLRPSPEPQTGN) are compositionally biased toward polar residues. The tract at residues 233 to 398 (DVRALDTVGN…TVECETAAAG (166 aa)) is transcription activation. ANK repeat units follow at residues 612–641 (DGQG…NINF) and 645–674 (NGWS…DAGA). IQ domains are found at residues 821-850 (LSCA…RIVK) and 844-873 (IRQR…SVGL). Positions 869–891 (WSVGLLEKIILRWRRKGNGLRGF) are calmodulin-binding. A coiled-coil region spans residues 915 to 943 (QEDEYDYLKEGRKQTEERLQKALTRVKSM). Ser942 is modified (phosphoserine).

It belongs to the CAMTA family. Expressed in roots, stems, leaves, pollen and siliques.

It localises to the nucleus. Transcription activator that binds calmodulin in a calcium-dependent manner in vitro. Binds to the DNA consensus sequence 5'-[ACG]CGCG[GTC]-3'. Regulates transcriptional activity in response to calcium signals. Involved in freezing tolerance. Involved in freezing tolerance in association with CAMTA2 and CAMTA3. Contributes together with CAMTA2 and CAMTA3 to the positive regulation of the cold-induced expression of DREB1A/CBF3, DREB1B/CBF1 and DREB1C/CBF2. Involved in drought stress responses by regulating several drought-responsive genes. Involved in auxin signaling and responses to abiotic stresses. Activates the expression of the V-PPase proton pump AVP1 in pollen. The chain is Calmodulin-binding transcription activator 1 from Arabidopsis thaliana (Mouse-ear cress).